Here is a 154-residue protein sequence, read N- to C-terminus: Putative pre-16S rRNA nuclease (154 aa).

Belongs to the YqgF nuclease family.

It localises to the cytoplasm. Could be a nuclease involved in processing of the 5'-end of pre-16S rRNA. The polypeptide is Putative pre-16S rRNA nuclease (Rickettsia bellii (strain OSU 85-389)).